The following is a 418-amino-acid chain: Acyl-[acyl-carrier-protein] desaturase 4, chloroplastic (418 aa).

The transit peptide at 1-70 (MASSGLAVAA…ATAAAPADTA (70 aa)) directs the protein to the chloroplast. 6 residues coordinate Fe cation: E152, E190, H193, E243, E276, and H279.

This sequence belongs to the fatty acid desaturase type 2 family. In terms of assembly, homodimer. Requires Fe(2+) as cofactor.

Its subcellular location is the plastid. It is found in the chloroplast. It participates in lipid metabolism; fatty acid metabolism. Introduces a cis double bond in the acyl chain of an acyl-[acyl-carrier protein]. This Oryza sativa subsp. japonica (Rice) protein is Acyl-[acyl-carrier-protein] desaturase 4, chloroplastic.